We begin with the raw amino-acid sequence, 148 residues long: Puroindoline-A (148 aa).

Positions 1-19 are cleaved as a signal peptide; it reads MKALFLIGLLALVASTAFA. Positions 20–28 are excised as a propeptide; the sequence is QYSEVVGSY. Positions 147 to 148 are cleaved as a propeptide — removed in mature form; sequence YW.

Five disulfide bonds are present. As to expression, endosperm and aleurone layer of developing kernels. In the aleurone layer, mainly localized to starch granules and the surface of the plasma membrane, forming a uniform layer, also abundant in the intercellular space. In the endosperm, mainly localized to starch granules and the plasma membrane, but less abundant in the intercellular space. Not found in roots or coleoptiles.

Its subcellular location is the membrane. The protein resides in the secreted. The protein localises to the extracellular space. In terms of biological role, acts as a membranotoxin, probably through its antibacterial and antifungal activities, contributing to the defense mechanism of the plant against predators. Forms monovalent cation-selective ion channels in membranes. Has antibacterial activity against the Gram-positive bacteria S.aureus and C.michiganensis, and the Gram-negative bacteria E.coli, P.syringae pv phaseoli, A.tumefaciens and E.carotovora subsp carotovora. Acts synergistically with PINB against bacteria. Contributes to grain texture and hardness. In Triticum aestivum (Wheat), this protein is Puroindoline-A (PINA).